Reading from the N-terminus, the 248-residue chain is Probable transcriptional regulatory protein Acid_5948 (248 aa).

It belongs to the TACO1 family.

The protein resides in the cytoplasm. In Solibacter usitatus (strain Ellin6076), this protein is Probable transcriptional regulatory protein Acid_5948.